The primary structure comprises 1075 residues: Paired amphipathic helix protein pst2 (1075 aa).

PAH domains lie at 28 to 102, 138 to 208, and 243 to 319; these read SPNG…LPSS, LPCT…LPSS, and RPDN…TSLS. Phosphoserine is present on residues Ser-641 and Ser-643. The interval 647-700 is disordered; it reads LTEFVKQPKINGQRESRSAAAARKKEESGNKSQSNSQNSLSDESGNVTPVSKKQ. Basic and acidic residues predominate over residues 658–675; the sequence is GQRESRSAAAARKKEESG. Residues 676-691 are compositionally biased toward low complexity; it reads NKSQSNSQNSLSDESG.

As to quaternary structure, heterotetramer of alp13, clr6, prw1 and pst2.

It localises to the nucleus. Functionally, has a role in chromatin assembly and chromosome segregation. Involved in the deacetylation of histones. The protein is Paired amphipathic helix protein pst2 (pst2) of Schizosaccharomyces pombe (strain 972 / ATCC 24843) (Fission yeast).